The following is a 337-amino-acid chain: MIEIDGSFGEGGGQILRTSLTLSVITGKPFRIFNIRANRPNPGLQRQHLWAVKAMKMISNAETKGDEVGSKELIFVPHEIKGNTNIDIDVGTAGSVTLIIQTVLPAIINKNVRIRIKGGTDVPKSPTIDYIRLVYLEILRKIGIEAKLNLIKRGHYPEGGGEVIIENVNGNPSAFSLLELGKLTIIKGISHVSSLPAHIAERQMNSAREILSKLGVPIEIQTDVRQGEVSKGSGIALAAIGEKSIIGADSLGERGKRAEIVGEEAARILIDNLNTKASVDIHMSDMLMIFASLYGGEYIGAELTSHAYTNMEIIKKFLDIKIDVSGKRPFRFKAKIF.

ATP-binding positions include Gln-101 and 282 to 285; that span reads HMSD. The active-site Tele-AMP-histidine intermediate is the His-306.

It belongs to the RNA 3'-terminal cyclase family. Type 1 subfamily.

It localises to the cytoplasm. The catalysed reaction is a 3'-end 3'-phospho-ribonucleotide-RNA + ATP = a 3'-end 2',3'-cyclophospho-ribonucleotide-RNA + AMP + diphosphate. In terms of biological role, catalyzes the conversion of 3'-phosphate to a 2',3'-cyclic phosphodiester at the end of RNA. The mechanism of action of the enzyme occurs in 3 steps: (A) adenylation of the enzyme by ATP; (B) transfer of adenylate to an RNA-N3'P to produce RNA-N3'PP5'A; (C) and attack of the adjacent 2'-hydroxyl on the 3'-phosphorus in the diester linkage to produce the cyclic end product. The biological role of this enzyme is unknown but it is likely to function in some aspects of cellular RNA processing. The chain is RNA 3'-terminal phosphate cyclase from Saccharolobus islandicus (strain M.16.4 / Kamchatka #3) (Sulfolobus islandicus).